Consider the following 121-residue polypeptide: Putative iron-sulfur cluster insertion protein ErpA (121 aa).

Residues cysteine 49, cysteine 113, and cysteine 115 each contribute to the iron-sulfur cluster site.

Belongs to the HesB/IscA family. As to quaternary structure, homodimer. The cofactor is iron-sulfur cluster.

Its function is as follows. Required for insertion of 4Fe-4S clusters. In Polaromonas sp. (strain JS666 / ATCC BAA-500), this protein is Putative iron-sulfur cluster insertion protein ErpA.